A 515-amino-acid polypeptide reads, in one-letter code: Adenine DNA glycosylase (515 aa).

The segment covering 1–24 (MKKLQASVRSHKKQPANHKRRRTR) has biased composition (basic residues). A disordered region spans residues 1 to 38 (MKKLQASVRSHKKQPANHKRRRTRALSSSQAKPSSLDG). The Proton donor/acceptor role is filled by Glu-105. Residues Cys-261, Cys-268, Cys-271, and Cys-277 each contribute to the [4Fe-4S] cluster site. The 132-residue stretch at 335–466 (PREEYSATCV…AMKKVFRMYE (132 aa)) folds into the Nudix hydrolase domain. Positions 376 to 398 (VTLEPSEQHQHKALLQELQRWCG) match the Nudix box motif. The segment at 468 to 494 (HRQGTRKGSKRSQVCPPSSRKKPSLGQ) is disordered.

Belongs to the Nth/MutY family. Requires [4Fe-4S] cluster as cofactor. Expressed in heart, lung, liver, intestine, brain and thymus.

It localises to the nucleus. Its subcellular location is the mitochondrion. It catalyses the reaction Hydrolyzes free adenine bases from 7,8-dihydro-8-oxoguanine:adenine mismatched double-stranded DNA, leaving an apurinic site.. In terms of biological role, involved in oxidative DNA damage repair. Initiates repair of A*oxoG to C*G by removing the inappropriately paired adenine base from the DNA backbone. Possesses both adenine and 2-OH-A DNA glycosylase activities. The polypeptide is Adenine DNA glycosylase (Mutyh) (Mus musculus (Mouse)).